A 189-amino-acid chain; its full sequence is Putative manganese efflux pump MntP (189 aa).

The next 6 helical transmembrane spans lie at 3–23, 41–61, 62–82, 103–123, 132–152, and 167–187; these read IVST…AAVS, MIFG…GRVA, ADYV…FLGI, SFIL…SVGV, IVPV…AGVM, and IIGG…HLYG.

Belongs to the MntP (TC 9.B.29) family.

The protein localises to the cell inner membrane. Its function is as follows. Probably functions as a manganese efflux pump. The sequence is that of Putative manganese efflux pump MntP from Methylobacillus flagellatus (strain ATCC 51484 / DSM 6875 / VKM B-1610 / KT).